Consider the following 62-residue polypeptide: Photosystem II reaction center protein Z (62 aa).

Helical transmembrane passes span 8–28 (AVFA…VVFA) and 41–61 (FSGT…NSLI).

It belongs to the PsbZ family. As to quaternary structure, PSII is composed of 1 copy each of membrane proteins PsbA, PsbB, PsbC, PsbD, PsbE, PsbF, PsbH, PsbI, PsbJ, PsbK, PsbL, PsbM, PsbT, PsbY, PsbZ, Psb30/Ycf12, at least 3 peripheral proteins of the oxygen-evolving complex and a large number of cofactors. It forms dimeric complexes.

The protein resides in the plastid. It is found in the chloroplast thylakoid membrane. Its function is as follows. May control the interaction of photosystem II (PSII) cores with the light-harvesting antenna, regulates electron flow through the 2 photosystem reaction centers. PSII is a light-driven water plastoquinone oxidoreductase, using light energy to abstract electrons from H(2)O, generating a proton gradient subsequently used for ATP formation. In Amborella trichopoda, this protein is Photosystem II reaction center protein Z.